Consider the following 339-residue polypeptide: Anthranilate phosphoribosyltransferase (339 aa).

5-phospho-alpha-D-ribose 1-diphosphate-binding positions include G80, G83–D84, T88, N90–T93, K108–S116, and S120. G80 provides a ligand contact to anthranilate. S92 is a binding site for Mg(2+). Position 111 (N111) interacts with anthranilate. Position 166 (R166) interacts with anthranilate. Mg(2+) contacts are provided by D225 and E226.

Belongs to the anthranilate phosphoribosyltransferase family. As to quaternary structure, homodimer. Mg(2+) serves as cofactor.

It catalyses the reaction N-(5-phospho-beta-D-ribosyl)anthranilate + diphosphate = 5-phospho-alpha-D-ribose 1-diphosphate + anthranilate. The protein operates within amino-acid biosynthesis; L-tryptophan biosynthesis; L-tryptophan from chorismate: step 2/5. In terms of biological role, catalyzes the transfer of the phosphoribosyl group of 5-phosphorylribose-1-pyrophosphate (PRPP) to anthranilate to yield N-(5'-phosphoribosyl)-anthranilate (PRA). The sequence is that of Anthranilate phosphoribosyltransferase from Alkaliphilus metalliredigens (strain QYMF).